An 837-amino-acid polypeptide reads, in one-letter code: Leucine-zipper-like transcriptional regulator 1 (837 aa).

N-acetylalanine is present on alanine 2. Kelch repeat units follow at residues alanine 76–serine 125, methionine 127–aspartate 182, leucine 184–aspartate 235, lysine 236–tyrosine 282, histidine 292–alanine 338, and alanine 396–glycine 447. The interval serine 324 to arginine 352 is disordered. 2 consecutive BTB domains span residues cysteine 440–arginine 534 and cysteine 664–proline 733.

Belongs to the LZTR1 family. As to quaternary structure, homodimer. Component of the BCR(LZTR1) E3 ubiquitin ligase complex, at least composed of CUL3, LZTR1 and RBX1. Interacts with Ras (K-Ras/KRAS, N-Ras/NRAS and H-Ras/HRAS). Interacts with RAF1. Interacts with SHOC2. Interacts with PPP1CB. Post-translationally, phosphorylated on tyrosine upon induction of apoptosis, leading to its degradation by the proteasome. In terms of tissue distribution, widely expressed.

Its subcellular location is the endomembrane system. It is found in the recycling endosome. The protein resides in the golgi apparatus. It participates in protein modification; protein ubiquitination. Its function is as follows. Substrate-specific adapter of a BCR (BTB-CUL3-RBX1) E3 ubiquitin-protein ligase complex that mediates ubiquitination of Ras (K-Ras/KRAS, N-Ras/NRAS and H-Ras/HRAS). Is a negative regulator of RAS-MAPK signaling that acts by controlling Ras levels and decreasing Ras association with membranes. The protein is Leucine-zipper-like transcriptional regulator 1 of Mus musculus (Mouse).